Reading from the N-terminus, the 443-residue chain is Exodeoxyribonuclease 7 large subunit (443 aa).

It belongs to the XseA family. Heterooligomer composed of large and small subunits.

Its subcellular location is the cytoplasm. It carries out the reaction Exonucleolytic cleavage in either 5'- to 3'- or 3'- to 5'-direction to yield nucleoside 5'-phosphates.. Functionally, bidirectionally degrades single-stranded DNA into large acid-insoluble oligonucleotides, which are then degraded further into small acid-soluble oligonucleotides. The protein is Exodeoxyribonuclease 7 large subunit of Vibrio vulnificus (strain CMCP6).